The primary structure comprises 493 residues: Cytochrome P450 monooxygenase mfmF (493 aa).

2 helical membrane passes run 3–23 (SLIPLTAIVLVLVAILHRLFF) and 301–321 (VLFAGADSTAVMLATILFHLV). A heme-binding site is contributed by C440.

This sequence belongs to the cytochrome P450 family. Heme is required as a cofactor.

Its subcellular location is the membrane. It functions in the pathway secondary metabolite biosynthesis; terpenoid biosynthesis. Its function is as follows. Cytochrome P450 monooxygenase; part of the gene cluster that mediates the biosynthesis of the phthalide-terpenoid hybrid 11'-O-desmethylfendlerol. Within the pathway, mfmF catalyzes C-3 hydroxylation of 5-hydroxy-4-(hydroxymethyl)-7-methoxy-6-methylphthalide to yield cyclopolic acid. The biosynthesis of 11'-O-desmethylfendlerol begins with the NR-PKS mfmB that forms 3,5-dimethylorsellinic acid (DMOA), which is then transformed into the phthalide 5,7-dihydroxy-4-(hydroxymethyl)-6-methylphthalide by the cytochrome P450 monooxygenase mfmA and the hydrolase mfmC. Subsequently, the methyltransferase mfmE catalyzes 7-O-methylation to yield 5-hydroxy-4-(hydroxymethyl)-7-methoxy-6-methylphthalide, which undergoes C-3 hydroxylation by the cytochrome P450 monooxygenase mfmF. The resultant cyclopolic acid (2,5-dihydroxy-4-(hydroxymethyl)-7-methoxy-6-methylphthalide) is then farnesylated by the DMATS-type prenyltransferase mfmD to afford 5-O-farnesylcyclopolic acid. Finally, the Pyr4-family terpene cyclase mfmH cyclizes the farnesyl moiety of 5-O-farnesylcyclopolic acid into a drimane-like structure, thus completing the biosynthesis of 11'-O-desmethylfendlerol. The protein is Cytochrome P450 monooxygenase mfmF of Annulohypoxylon moriforme (Filamentous fungus).